A 441-amino-acid polypeptide reads, in one-letter code: MSNVTRQPKIGFVSLGCPKNLVDSERILTELRTEGYDVVPSYDDADMVIVNTCGFIDSAVQESLEAIGEALTENGKVIVTGCLGAKVDQIREVHPKVLEITGPHSYEQVLEHVHHYVPKPKHNPFLSLVPEQGVKLTPRHYAYLKISEGCNHRCTFCIIPSMRGDLVSRPIGEVLSEAKRLVDAGVKEILVISQDTSAYGVDVKHRTGFHNGEPVKTSMVDLCEQLSKLGIWTRLHYVYPYPHVDDVIPLMAEGKILPYLDIPLQHASPRILKLMKRPGAVDRQLARIKQWREICPELTLRSTFIVGFPGETEDDFQMLLDFLKEARLDRVGCFKYSPVEGAGANALPDQVPEEVKEERWNRFMQLQQQISAERLQEKVGREILVIIDEVDKEGAIGRSMADAPEIDGAVYLNGETNVKPGDVIRVKVDNADEYDLWGSRV.

The 111-residue stretch at Pro-8–Pro-118 folds into the MTTase N-terminal domain. Residues Cys-17, Cys-53, Cys-82, Cys-150, Cys-154, and Cys-157 each coordinate [4Fe-4S] cluster. In terms of domain architecture, Radical SAM core spans Leu-136–Glu-373. Residues Gln-376–Val-441 enclose the TRAM domain.

It belongs to the methylthiotransferase family. RimO subfamily. Requires [4Fe-4S] cluster as cofactor.

It localises to the cytoplasm. It catalyses the reaction L-aspartate(89)-[ribosomal protein uS12]-hydrogen + (sulfur carrier)-SH + AH2 + 2 S-adenosyl-L-methionine = 3-methylsulfanyl-L-aspartate(89)-[ribosomal protein uS12]-hydrogen + (sulfur carrier)-H + 5'-deoxyadenosine + L-methionine + A + S-adenosyl-L-homocysteine + 2 H(+). Its function is as follows. Catalyzes the methylthiolation of an aspartic acid residue of ribosomal protein uS12. The polypeptide is Ribosomal protein uS12 methylthiotransferase RimO (Citrobacter koseri (strain ATCC BAA-895 / CDC 4225-83 / SGSC4696)).